A 445-amino-acid chain; its full sequence is MKVKMLSRNPDNYVRETKLDLQRVPRNYDPTLHPFEVPREYVRALNATKLERVFAKPFLASLDGHRDGVNCLAKHPKNLATVLSGACDGEVRIWNLTQRNCIRTIQAHEGFVRGICTRFCGTSFFTVGDDKTVKQWKMDGPGYGDEEEPLHTILGKTVYTGIDHHWKEAVFATCGQQVDIWDEQRTNPVCSMTWGFDSISSVKFNPIETFLLGSCASDRNIVLYDMRQATPLKKVILDMRTNTICWNPMEAFIFTAANEDYNLYTFDMSALDTPVMVHMDHVSAVLDVDYSPTGKEFVSASFDKSIRIFPVDKSRSREVYHTKRMQHVICVKWTSDSKYIMCGSDEMNIRLWKANASEKLGVLTSREKAAKDYNQKLKEKFQHYPHIKRIARHRHLPKSIYSQIQEQRIMKEARRRKEVNRIKHSKPGSVPIVSEKKKHVVAVVK.

Lys49 carries the N6-acetyllysine modification. 7 WD repeats span residues 64-104 (GHRD…CIRT), 107-146 (AHEGFVRGICTRFCGTSFFTVGDDKTVKQWKMDGPGYGDE), 149-191 (PLHT…PVCS), 194-234 (WGFD…PLKK), 236-276 (ILDM…TPVM), 280-319 (DHVSAVLDVDYSPTGKEFVSASFDKSIRIFPVDKSRSREV), and 323-362 (KRMQHVICVKWTSDSKYIMCGSDEMNIRLWKANASEKLGV). The interval 353-441 (KANASEKLGV…IVSEKKKHVV (89 aa)) is required for nucleolar location.

Belongs to the WD repeat DCAF13/WDSOF1 family. In terms of assembly, part of the small subunit (SSU) processome, composed of more than 70 proteins and the RNA chaperone small nucleolar RNA (snoRNA) U3. Component of the DCX(DCAF13) E3 ubiquitin ligase complex, at least composed of CUL4 (CUL4A or CUL4B), DDB1, DCAF13 and RBX1. Interacts (via WD40 domain) with DDB1. Interacts with ESR1 and LATS1.

The protein resides in the nucleus. It is found in the nucleolus. It participates in protein modification; protein ubiquitination. Part of the small subunit (SSU) processome, first precursor of the small eukaryotic ribosomal subunit. During the assembly of the SSU processome in the nucleolus, many ribosome biogenesis factors, an RNA chaperone and ribosomal proteins associate with the nascent pre-rRNA and work in concert to generate RNA folding, modifications, rearrangements and cleavage as well as targeted degradation of pre-ribosomal RNA by the RNA exosome. Participates in the 18S rRNA processing in growing oocytes, being essential for oocyte nonsurrounded nucleolus (NSN) to surrounded nucleolus (SN) transition. In terms of biological role, substrate-recognition component of a DCX (DDB1-CUL4-X-box) E3 ubiquitin-protein ligase complex that plays a key role in embryo preimplantation and is required for normal meiotic cycle progression in oocytes. Acts as a maternal factor that regulates oocyte and zygotic chromatin tightness during maternal to zygotic transition. Also involved in the transformation of the endometrium into the decidua, known as decidualization, providing a solid foundation for implantation of blastocysts. Recognizes the histone methyltransferases SUV39H1 and SUV39H2 and directs them to polyubiquitination and proteasomal degradation, which facilitates the H3K9me3 removal and early zygotic gene expression, essential steps for progressive genome reprogramming and the establishment of pluripotency during preimplantation embryonic development. Supports the spindle assembly and chromosome condensation during oocyte meiotic division by targeting the polyubiquitination and degradation of PTEN, a lipid phosphatase that inhibits PI3K pathway as well as oocyte growth and maturation. Targets PMP22 for polyubiquitination and proteasomal degradation. The polypeptide is DDB1- and CUL4-associated factor 13 (DCAF13) (Pongo abelii (Sumatran orangutan)).